We begin with the raw amino-acid sequence, 148 residues long: Large ribosomal subunit protein bL9 (148 aa).

It belongs to the bacterial ribosomal protein bL9 family.

Functionally, binds to the 23S rRNA. The polypeptide is Large ribosomal subunit protein bL9 (Azotobacter vinelandii (strain DJ / ATCC BAA-1303)).